The primary structure comprises 57 residues: Protein Ric1 (57 aa).

A run of 2 helical transmembrane segments spans residues 8 to 28 (IPRL…QVGC) and 34 to 54 (INCL…VYIL).

The protein belongs to the UPF0057 (PMP3) family.

It is found in the membrane. The chain is Protein Ric1 (RIC1) from Phytophthora infestans (Potato late blight agent).